The following is a 541-amino-acid chain: NAD(P)H-quinone oxidoreductase subunit 2 A, chloroplastic (541 aa).

The next 14 membrane-spanning stretches (helical) occupy residues 24-44 (LLLF…GLIL), 57-77 (IPWL…ALLF), 99-119 (IFQF…VEYI), 124-144 (MAIT…MFLC), 149-169 (FITI…LSGY), 183-203 (YLLM…WLYG), 227-247 (PGIS…LSPA), 289-309 (ILSP…AASA), 326-346 (WHLL…LIAI), 354-374 (MLAY…IVGD), 385-405 (YMLF…LFGL), 426-446 (ALSL…AGFF), 449-469 (LYLF…IGLL), and 515-535 (MIVC…IIAI).

It belongs to the complex I subunit 2 family. As to quaternary structure, NDH is composed of at least 16 different subunits, 5 of which are encoded in the nucleus.

The protein localises to the plastid. It is found in the chloroplast thylakoid membrane. The enzyme catalyses a plastoquinone + NADH + (n+1) H(+)(in) = a plastoquinol + NAD(+) + n H(+)(out). It catalyses the reaction a plastoquinone + NADPH + (n+1) H(+)(in) = a plastoquinol + NADP(+) + n H(+)(out). NDH shuttles electrons from NAD(P)H:plastoquinone, via FMN and iron-sulfur (Fe-S) centers, to quinones in the photosynthetic chain and possibly in a chloroplast respiratory chain. The immediate electron acceptor for the enzyme in this species is believed to be plastoquinone. Couples the redox reaction to proton translocation, and thus conserves the redox energy in a proton gradient. This Coffea arabica (Arabian coffee) protein is NAD(P)H-quinone oxidoreductase subunit 2 A, chloroplastic.